The chain runs to 669 residues: Very long-chain fatty acid transport protein (669 aa).

The Cytoplasmic segment spans residues 1–5 (MSPIQ). A helical membrane pass occupies residues 6-26 (VVVFALSRIFLLLFRLIKLII). The Extracellular portion of the chain corresponds to 27-148 (TPIQKSLGYL…YVAIDCTNKP (122 aa)). The chain crosses the membrane as a helical span at residues 149–169 (LFVFLWLSLWNIGAIPAFLNY). Topologically, residues 170 to 270 (NTKGTPLVHS…TGLPKSAIMS (101 aa)) are cytoplasmic. 256–267 (YTSGTTGLPKSA) serves as a coordination point for ATP. The stretch at 271 to 339 (WRKSSVGCQV…FWKQVYLTGA (69 aa)) is an intramembrane region. At 340–669 (THIQYVGEVC…EAIDAQTIKL (330 aa)) the chain is on the cytoplasmic side. The short motif at 501–551 (DAWYRCGDLLKADEYGLWYFLDRMGDTFRWKSENVSTTEVEDQLTASNKEQ) is the FACS element. A C-terminal peroxisome targeting signal (PTS1) motif is present at residues 667-669 (IKL).

Belongs to the ATP-dependent AMP-binding enzyme family. Interacts with fatty acyl-CoA synthetases FAA1 and FAA4.

It is found in the lipid droplet. It localises to the cell membrane. Its subcellular location is the peroxisome membrane. The protein localises to the peroxisome. It catalyses the reaction a very long-chain fatty acid + ATP + CoA = a very long-chain fatty acyl-CoA + AMP + diphosphate. It carries out the reaction tetracosanoate + ATP + CoA = tetracosanoyl-CoA + AMP + diphosphate. Its function is as follows. Acyl-CoA synthetase required for both the import of long chain fatty acids (LCFAs) (C14-C18) and the activation very long chain fatty acids (VLCFAs) (C20-C26) by esterification of the fatty acids into metabolically active CoA-thioesters for subsequent degradation or incorporation into phospholipids. The transport and fatty acyl-CoA synthetase activities are genetically separable and are thus independent activities. Esterifies VLCFAs in the peroxisome matrix. The VLCFAs are actively transported into peroxisomes by a PXA1-PXA2 heterodimeric transporter in the peroxisomal membrane. This is Very long-chain fatty acid transport protein (FAT1) from Saccharomyces cerevisiae (strain ATCC 204508 / S288c) (Baker's yeast).